The primary structure comprises 1182 residues: Lysine-specific demethylase hairless (1182 aa).

Disordered regions lie at residues 227–257, 302–380, 411–443, and 507–546; these read LGLAPGGHLQQACESEGPSLHQRDGETGAGR, YQLG…KKTW, AGSPEVQGASRGPAPKRPSHPFPGTGRQGARAW, and TGHSQKSRRSPLEEKQLEEEDSSATSEEGGGGPGPEASLN. The span at 307 to 321 shows a compositional bias: pro residues; it reads PATPRCPSPGPPTPP. The LXXLL motif 1 motif lies at 561–565; sequence LCRLL. Residues 595 to 620 form a C6-type zinc finger; that stretch reads CSRCHHGLFNTHWRCSHCSHRLCVAC. Residues 697 to 746 are disordered; it reads GDGGQQKEPTEKTPPTPQPSCNGDSNRTKDIKEETPDSTESPAEDGAGRS. Basic and acidic residues predominate over residues 722 to 731; sequence NRTKDIKEET. The short motif at 753 to 757 is the LXXLL motif 2 element; that stretch reads LCELL. One can recognise a JmjC domain in the interval 939-1150; the sequence is DASRVQNLAS…LSAQLYHQGA (212 aa). Fe cation is bound by residues cysteine 1000, glutamate 1002, and histidine 1118.

It depends on Fe(2+) as a cofactor. Expressed predominantly in brain, hair follicles and interfollicular epidermis. No expression in dermis.

The protein localises to the nucleus. It carries out the reaction N(6),N(6)-dimethyl-L-lysyl(9)-[histone H3] + 2 2-oxoglutarate + 2 O2 = L-lysyl(9)-[histone H3] + 2 formaldehyde + 2 succinate + 2 CO2. Functionally, histone demethylase that specifically demethylates both mono- and dimethylated 'Lys-9' of histone H3. May act as a transcription regulator controlling hair biology (via targeting of collagens), neural activity, and cell cycle. This Mus musculus (Mouse) protein is Lysine-specific demethylase hairless (Hr).